Here is a 434-residue protein sequence, read N- to C-terminus: Trigger factor (434 aa).

A PPIase FKBP-type domain is found at 160 to 245; the sequence is GDKVKMNFVG…LTEVLAANLP (86 aa).

This sequence belongs to the FKBP-type PPIase family. Tig subfamily.

Its subcellular location is the cytoplasm. It carries out the reaction [protein]-peptidylproline (omega=180) = [protein]-peptidylproline (omega=0). Functionally, involved in protein export. Acts as a chaperone by maintaining the newly synthesized protein in an open conformation. Functions as a peptidyl-prolyl cis-trans isomerase. The chain is Trigger factor from Shewanella sp. (strain MR-4).